A 434-amino-acid chain; its full sequence is Serine hydroxymethyltransferase 1 (434 aa).

(6S)-5,6,7,8-tetrahydrofolate contacts are provided by residues Leu136 and 140–142; that span reads GHL. Lys245 bears the N6-(pyridoxal phosphate)lysine mark.

It belongs to the SHMT family. Homodimer. Pyridoxal 5'-phosphate serves as cofactor.

Its subcellular location is the cytoplasm. It catalyses the reaction (6R)-5,10-methylene-5,6,7,8-tetrahydrofolate + glycine + H2O = (6S)-5,6,7,8-tetrahydrofolate + L-serine. Its pathway is one-carbon metabolism; tetrahydrofolate interconversion. It participates in amino-acid biosynthesis; glycine biosynthesis; glycine from L-serine: step 1/1. In terms of biological role, catalyzes the reversible interconversion of serine and glycine with tetrahydrofolate (THF) serving as the one-carbon carrier. This reaction serves as the major source of one-carbon groups required for the biosynthesis of purines, thymidylate, methionine, and other important biomolecules. Also exhibits THF-independent aldolase activity toward beta-hydroxyamino acids, producing glycine and aldehydes, via a retro-aldol mechanism. This chain is Serine hydroxymethyltransferase 1, found in Rhodospirillum rubrum (strain ATCC 11170 / ATH 1.1.1 / DSM 467 / LMG 4362 / NCIMB 8255 / S1).